Reading from the N-terminus, the 353-residue chain is Photosystem II protein D1 (353 aa).

T2 is subject to N-acetylthreonine. Residue T2 is modified to Phosphothreonine. The next 3 helical transmembrane spans lie at 29–46, 118–133, and 142–156; these read YIGWFGVLMIPTLLTATS, HFLLGVACYMGREWEL, and WIAVAYSAPVAAATA. H118 provides a ligand contact to chlorophyll a. Y126 is a pheophytin a binding site. [CaMn4O5] cluster-binding residues include D170 and E189. Residues 197 to 218 form a helical membrane-spanning segment; sequence FHMLGVAGVFGGSLFSAMHGSL. H198 contributes to the chlorophyll a binding site. Residues H215 and 264–265 contribute to the a quinone site; that span reads SF. Position 215 (H215) interacts with Fe cation. A Fe cation-binding site is contributed by H272. A helical membrane pass occupies residues 274-288; sequence FLAAWPVAGIWFTAL. H332, E333, D342, and A344 together coordinate [CaMn4O5] cluster. The propeptide occupies 345-353; that stretch reads AVESISIGG.

Belongs to the reaction center PufL/M/PsbA/D family. As to quaternary structure, PSII is composed of 1 copy each of membrane proteins PsbA, PsbB, PsbC, PsbD, PsbE, PsbF, PsbH, PsbI, PsbJ, PsbK, PsbL, PsbM, PsbT, PsbX, PsbY, PsbZ, Psb30/Ycf12, at least 3 peripheral proteins of the oxygen-evolving complex and a large number of cofactors. It forms dimeric complexes. The D1/D2 heterodimer binds P680, chlorophylls that are the primary electron donor of PSII, and subsequent electron acceptors. It shares a non-heme iron and each subunit binds pheophytin, quinone, additional chlorophylls, carotenoids and lipids. D1 provides most of the ligands for the Mn4-Ca-O5 cluster of the oxygen-evolving complex (OEC). There is also a Cl(-1) ion associated with D1 and D2, which is required for oxygen evolution. The PSII complex binds additional chlorophylls, carotenoids and specific lipids. is required as a cofactor. Post-translationally, tyr-161 forms a radical intermediate that is referred to as redox-active TyrZ, YZ or Y-Z. In terms of processing, C-terminally processed by CTPA; processing is essential to allow assembly of the oxygen-evolving complex and thus photosynthetic growth.

The protein resides in the plastid. Its subcellular location is the chloroplast thylakoid membrane. It catalyses the reaction 2 a plastoquinone + 4 hnu + 2 H2O = 2 a plastoquinol + O2. Photosystem II (PSII) is a light-driven water:plastoquinone oxidoreductase that uses light energy to abstract electrons from H(2)O, generating O(2) and a proton gradient subsequently used for ATP formation. It consists of a core antenna complex that captures photons, and an electron transfer chain that converts photonic excitation into a charge separation. The D1/D2 (PsbA/PsbD) reaction center heterodimer binds P680, the primary electron donor of PSII as well as several subsequent electron acceptors. The chain is Photosystem II protein D1 from Pinus koraiensis (Korean pine).